Consider the following 246-residue polypeptide: Small ribosomal subunit protein uS2 (246 aa).

Belongs to the universal ribosomal protein uS2 family.

This Burkholderia vietnamiensis (strain G4 / LMG 22486) (Burkholderia cepacia (strain R1808)) protein is Small ribosomal subunit protein uS2.